The primary structure comprises 473 residues: 3-isopropylmalate dehydratase large subunit (473 aa).

Positions 351, 414, and 417 each coordinate [4Fe-4S] cluster.

The protein belongs to the aconitase/IPM isomerase family. LeuC type 1 subfamily. Heterodimer of LeuC and LeuD. It depends on [4Fe-4S] cluster as a cofactor.

The catalysed reaction is (2R,3S)-3-isopropylmalate = (2S)-2-isopropylmalate. The protein operates within amino-acid biosynthesis; L-leucine biosynthesis; L-leucine from 3-methyl-2-oxobutanoate: step 2/4. Catalyzes the isomerization between 2-isopropylmalate and 3-isopropylmalate, via the formation of 2-isopropylmaleate. The polypeptide is 3-isopropylmalate dehydratase large subunit (Polaromonas sp. (strain JS666 / ATCC BAA-500)).